The following is a 632-amino-acid chain: Bifunctional protein GlmU (632 aa).

The segment at 1 to 229 (MAERELSVAI…PQEIVGVNDR (229 aa)) is pyrophosphorylase. Residues 11–14 (LAAG), Lys25, Gln76, and 81–82 (GT) contribute to the UDP-N-acetyl-alpha-D-glucosamine site. Asp106 is a Mg(2+) binding site. The UDP-N-acetyl-alpha-D-glucosamine site is built by Gly143, Glu158, Asn173, and Asn227. Asn227 serves as a coordination point for Mg(2+). Residues 230 to 250 (RQLAQAYQILQDRLKEAWMEA) form a linker region. An N-acetyltransferase region spans residues 251-632 (GVTFVDPDSS…ADNSRPKSLQ (382 aa)). Positions 332 and 350 each coordinate UDP-N-acetyl-alpha-D-glucosamine. The Proton acceptor role is filled by His362. UDP-N-acetyl-alpha-D-glucosamine-binding residues include Tyr365 and Asn376. Residues Ala379, 385–386 (NY), Ala422, and Arg441 each bind acetyl-CoA. The disordered stretch occupies residues 600 to 632 (VAGDPCWPSPPPQPQQNQQTKPEADNSRPKSLQ). The segment covering 621 to 632 (PEADNSRPKSLQ) has biased composition (basic and acidic residues).

In the N-terminal section; belongs to the N-acetylglucosamine-1-phosphate uridyltransferase family. The protein in the C-terminal section; belongs to the transferase hexapeptide repeat family. As to quaternary structure, homotrimer. It depends on Mg(2+) as a cofactor.

The protein localises to the cytoplasm. It catalyses the reaction alpha-D-glucosamine 1-phosphate + acetyl-CoA = N-acetyl-alpha-D-glucosamine 1-phosphate + CoA + H(+). It carries out the reaction N-acetyl-alpha-D-glucosamine 1-phosphate + UTP + H(+) = UDP-N-acetyl-alpha-D-glucosamine + diphosphate. The protein operates within nucleotide-sugar biosynthesis; UDP-N-acetyl-alpha-D-glucosamine biosynthesis; N-acetyl-alpha-D-glucosamine 1-phosphate from alpha-D-glucosamine 6-phosphate (route II): step 2/2. It participates in nucleotide-sugar biosynthesis; UDP-N-acetyl-alpha-D-glucosamine biosynthesis; UDP-N-acetyl-alpha-D-glucosamine from N-acetyl-alpha-D-glucosamine 1-phosphate: step 1/1. Its pathway is bacterial outer membrane biogenesis; LPS lipid A biosynthesis. Catalyzes the last two sequential reactions in the de novo biosynthetic pathway for UDP-N-acetylglucosamine (UDP-GlcNAc). The C-terminal domain catalyzes the transfer of acetyl group from acetyl coenzyme A to glucosamine-1-phosphate (GlcN-1-P) to produce N-acetylglucosamine-1-phosphate (GlcNAc-1-P), which is converted into UDP-GlcNAc by the transfer of uridine 5-monophosphate (from uridine 5-triphosphate), a reaction catalyzed by the N-terminal domain. The polypeptide is Bifunctional protein GlmU (Synechococcus sp. (strain JA-2-3B'a(2-13)) (Cyanobacteria bacterium Yellowstone B-Prime)).